The primary structure comprises 1527 residues: MRFMLLMLQLLGLLLLLAGGVQSVYCPAGCTCLERTVRCIRAKLSAVPKLPQDTQTLDLRFNHIEELPANAFSGLAQLTTLFLNDNELAYLQDGALNGLTALRFVYLNNNRLSRLPATIFQRMPRLEAIFLENNDIWQLPAGLFDNLPRLNRLIMYNNKLTQLPVDGFNRLNNLKRLRLDGNAIDCNCGVYSLWRRWHLDVQRQLVSISLTCAAPQMLQNQGFSSLGEHHFKCAKPQFLVAPQDAQVAAGEQVELSCEVTGLPRPQITWMHNTQELGLEEQAQAEILPSGSLLIRSADTSDMGIYQCIARNEMGALRSQPVRLVVNGGNHPLDSPIDARSNQVWADAGTPMHGATPLPSPLPSPPHFTHQPHDQIVALHGSGHVLLDCAASGWPQPDIQWFVNGRQLLQSTPSLQLQANGSLILLQPNQLSAGTYRCEARNSLGSVQATARIELKELPEILTAPQSQTIKLGKAFVLECDADGNPLPTIDWQLNGVPLPGNTPDLQLENENTELVVGAARQEHAGVYRCTAHNENGETSVEATIKVERSQSPPQLAIEPSNLVAITGTTIELPCQADQPEDGLQISWRHDGRLIDPNVQLAEKYQISGAGSLFVKNVTIPDGGRYECQLKNQFGRASASALVTIRNNVDLAPGDRYVRIAFAEAAKEIDLAINNTLDMLFSNRSDKAPPNYGELLRVFRFPTGEARQLARAAEIYERTLVNIRKHVQEGDNLTMKSEEYEFRDLLSREHLHLVAELSGCMEHREMPNCTDMCFHSRYRSIDGTCNNLQHPTWGASLTAFRRLAPPIYENGFSMPVGWTKGMLYSGHAKPSARLVSTSLVATKEITPDARITHMVMQWGQFLDHDLDHAIPSVSSESWDGIDCKKSCEMAPPCYPIEVPPNDPRVRNRRCIDVVRSSAICGSGMTSLFFDSVQHREQINQLTSYIDASQVYGYSTAFAQELRNLTSQEGLLRVGVHFPRQKDMLPFAAPQDGMDCRRNLDENTMSCFVSGDIRVNEQVGLLAMHTIWMREHNRIASKLKQINSHWDGDTLYQEARKIVGAQMQHITFKQWLPLIIGESGMEMMGEYQGYNPQLNPSIANEFATAALRFGHTIINPILHRLNETFQPIPQGHLLLHKAFFAPWRLAYEGGVDPLMRGFLAVPAKLKTPDQNLNTELTEKLFQTAHAVALDLAAINIQRGRDHGMPGYNVYRKLCNLTVAQDFEDLAGEISSAEIRQKMKELYGHPDNVDVWLGGILEDQVEGGKVGPLFQCLLVEQFRRLRDGDRLYYENPGVFSPEQLTQIKQANFGRVLCDVGDNFDQVTENVFILAKHQGGYKKCEDIIGINLYLWQECGRCNSPPAIFDSYIPQTYTKRSNRQKRDLGKENDEVATAESYDSPLESLYDVNEERVSGLEELIGSFQKELKKLHKKLRKLEDSCNSADSEPVAQVVQLAAAPPQLVSKPKRSHCVDDKGTTRLNNEVWSPDVCTKCNCFHGQVNCLRERCGEVSCPPGVDPLTPPEACCPHCPMVK.

Positions 1 to 23 (MRFMLLMLQLLGLLLLLAGGVQS) are cleaved as a signal peptide. The LRRNT domain occupies 24–53 (VYCPAGCTCLERTVRCIRAKLSAVPKLPQD). 6 LRR repeats span residues 51 to 74 (PQDT…AFSG), 75 to 98 (LAQL…ALNG), 99 to 122 (LTAL…IFQR), 124 to 146 (PRLE…LFDN), 147 to 170 (LPRL…GFNR), and 172 to 196 (NNLK…LWRR). Ig-like C2-type domains follow at residues 236-322 (PQFL…QPVR), 365-453 (PHFT…ARIE), 458-545 (PEIL…ATIK), and 553-643 (PQLA…ALVT). 4 disulfide bridges follow: Cys257-Cys307, Cys388-Cys437, Cys479-Cys529, and Cys574-Cys627. Asn419 is a glycosylation site (N-linked (GlcNAc...) asparagine). N-linked (GlcNAc...) asparagine glycosylation is found at Asn616, Asn673, Asn682, Asn731, and Asn767. Cys768 and Cys784 are oxidised to a cystine. Heme b is bound at residue Asp862. His863 acts as the Proton acceptor in catalysis. Asp864 lines the Ca(2+) pocket. Cystine bridges form between Cys882–Cys892 and Cys886–Cys909. Residues Thr941, Tyr943, Asp945, and Ser947 each contribute to the Ca(2+) site. N-linked (GlcNAc...) asparagine glycosylation occurs at Asn962. Cys994 and Cys1005 are joined by a disulfide. The heme b site is built by Glu1015 and His1109. Asn1120 and Asn1213 each carry an N-linked (GlcNAc...) asparagine glycan. 2 disulfide bridges follow: Cys1212-Cys1269 and Cys1310-Cys1336. A coiled-coil region spans residues 1403–1441 (NEERVSGLEELIGSFQKELKKLHKKLRKLEDSCNSADSE). Residues 1463–1524 (SHCVDDKGTT…PPEACCPHCP (62 aa)) form the VWFC domain.

The protein belongs to the peroxidase family. XPO subfamily. In terms of assembly, homotrimer; disulfide-linked. Requires Ca(2+) as cofactor. Heme b serves as cofactor. Expressed in hemocytes. Also expressed in the fat body and gastric caeca.

It is found in the secreted. It catalyses the reaction (5R)-5-hydroxy-L-lysyl-[collagen] + L-methionyl-[collagen] + H2O2 = [collagen]-(5R)-5-hydroxy-L-lysyl-N-S-L-methionyl-[collagen] + 2 H2O + H(+). The catalysed reaction is bromide + H2O2 = hypobromite + H2O. The enzyme catalyses (5R)-5-hydroxy-L-lysyl-[collagen] + L-methionyl-[collagen] + hypobromite = [collagen]-(5R)-5-hydroxy-L-lysyl-N-S-L-methionyl-[collagen] + bromide + H2O + H(+). It carries out the reaction L-lysyl-[collagen] + L-methionyl-[collagen] + H2O2 = [collagen]-L-lysyl-N-S-L-methionyl-[collagen] + 2 H2O + H(+). It catalyses the reaction L-lysyl-[collagen] + L-methionyl-[collagen] + hypobromite = [collagen]-L-lysyl-N-S-L-methionyl-[collagen] + bromide + H2O + H(+). The catalysed reaction is L-tyrosyl-[protein] + bromide + H2O2 + H(+) = 3-bromo-L-tyrosyl-[protein] + 2 H2O. The enzyme catalyses hypobromite + L-tyrosyl-[protein] + H(+) = 3-bromo-L-tyrosyl-[protein] + H2O. Catalyzes the two-electron oxidation of bromide by hydrogen peroxide and generates hypobromite as a reactive intermediate which mediates the formation of sulfilimine cross-links between methionine and hydroxylysine residues within an uncross-linked collagen IV NC1 hexamer. Plays a role in extracellular matrix consolidation, phagocytosis and defense. This chain is Peroxidasin, found in Drosophila melanogaster (Fruit fly).